The following is a 595-amino-acid chain: Cyclin-dependent kinase-like 3 (595 aa).

One can recognise a Protein kinase domain in the interval 4 to 286 (YETLGKVGEG…STDLLRHDYF (283 aa)). ATP-binding positions include 10 to 18 (VGEGSYGTV) and K33. The short motif at 45–51 (KIATREI) is the [NKR]KIAxRE element. Residue D125 is the Proton acceptor of the active site. Residue T158 is modified to Phosphothreonine. At Y160 the chain carries Phosphotyrosine. Disordered stretches follow at residues 362 to 427 (VIKA…PHAG), 448 to 513 (SSNL…NKRK), and 551 to 586 (RESK…GKNL). Residues 368-386 (GKGDVPDQKKPEYEGDHRQ) show a composition bias toward basic and acidic residues. Residues 387–397 (QGTADDTQPSS) are compositionally biased toward polar residues. The span at 448–457 (SSNLSHPNSR) shows a compositional bias: low complexity. 2 stretches are compositionally biased toward polar residues: residues 468-491 (SSQT…QVQT) and 499-509 (RTGQNDQISSG). Residues 570–585 (NQEKQEGGDGDCEGKN) are compositionally biased toward basic and acidic residues.

This sequence belongs to the protein kinase superfamily. CMGC Ser/Thr protein kinase family. CDC2/CDKX subfamily.

The protein resides in the cytoplasm. It carries out the reaction L-seryl-[protein] + ATP = O-phospho-L-seryl-[protein] + ADP + H(+). It catalyses the reaction L-threonyl-[protein] + ATP = O-phospho-L-threonyl-[protein] + ADP + H(+). This Mus musculus (Mouse) protein is Cyclin-dependent kinase-like 3.